Consider the following 69-residue polypeptide: Guanine nucleotide-binding protein G(I)/G(S)/G(O) subunit gamma-T2 (69 aa).

The residue at position 66 (C66) is a Cysteine methyl ester. C66 is lipidated: S-farnesyl cysteine. A propeptide spans 67–69 (removed in mature form); the sequence is VLS.

This sequence belongs to the G protein gamma family. As to quaternary structure, g proteins are composed of 3 units, alpha, beta and gamma.

It localises to the cell membrane. Its function is as follows. Guanine nucleotide-binding proteins (G proteins) are involved as a modulator or transducer in various transmembrane signaling systems. The beta and gamma chains are required for the GTPase activity, for replacement of GDP by GTP, and for G protein-effector interaction. The protein is Guanine nucleotide-binding protein G(I)/G(S)/G(O) subunit gamma-T2 (Gngt2) of Mus musculus (Mouse).